Consider the following 383-residue polypeptide: Spermidine/putrescine import ATP-binding protein PotA (383 aa).

The region spanning 12–246 is the ABC transporter domain; it reads IALRDISKVY…PSTPFVAGFI (235 aa). Residue 48-55 participates in ATP binding; it reads GPSGCGKT.

It belongs to the ABC transporter superfamily. Spermidine/putrescine importer (TC 3.A.1.11.1) family. The complex is composed of two ATP-binding proteins (PotA), two transmembrane proteins (PotB and PotC) and a solute-binding protein (PotD).

It localises to the cell membrane. It catalyses the reaction ATP + H2O + polyamine-[polyamine-binding protein]Side 1 = ADP + phosphate + polyamineSide 2 + [polyamine-binding protein]Side 1.. Functionally, part of the ABC transporter complex PotABCD involved in spermidine/putrescine import. Responsible for energy coupling to the transport system. The polypeptide is Spermidine/putrescine import ATP-binding protein PotA (Acidothermus cellulolyticus (strain ATCC 43068 / DSM 8971 / 11B)).